The sequence spans 264 residues: ATP synthase subunit a (264 aa).

Transmembrane regions (helical) follow at residues 39–59 (LDTL…FYIV), 97–117 (VAPL…MDLV), 139–159 (TADP…VIFY), 205–225 (LFGN…LPWW), and 239–259 (LLVI…YISL).

Belongs to the ATPase A chain family. As to quaternary structure, F-type ATPases have 2 components, CF(1) - the catalytic core - and CF(0) - the membrane proton channel. CF(1) has five subunits: alpha(3), beta(3), gamma(1), delta(1), epsilon(1). CF(0) has three main subunits: a(1), b(2) and c(9-12). The alpha and beta chains form an alternating ring which encloses part of the gamma chain. CF(1) is attached to CF(0) by a central stalk formed by the gamma and epsilon chains, while a peripheral stalk is formed by the delta and b chains.

It is found in the cell inner membrane. Key component of the proton channel; it plays a direct role in the translocation of protons across the membrane. This is ATP synthase subunit a from Coxiella burnetii (strain Dugway 5J108-111).